A 329-amino-acid polypeptide reads, in one-letter code: DNA-directed RNA polymerase subunit alpha (329 aa).

The interval 1–235 is alpha N-terminal domain (alpha-NTD); sequence MLGSVTDFLK…EQLDAFVDLR (235 aa). Positions 249–329 are alpha C-terminal domain (alpha-CTD); it reads FDPILLRPVD…NWPPASLADN (81 aa).

This sequence belongs to the RNA polymerase alpha chain family. As to quaternary structure, homodimer. The RNAP catalytic core consists of 2 alpha, 1 beta, 1 beta' and 1 omega subunit. When a sigma factor is associated with the core the holoenzyme is formed, which can initiate transcription.

The catalysed reaction is RNA(n) + a ribonucleoside 5'-triphosphate = RNA(n+1) + diphosphate. Its function is as follows. DNA-dependent RNA polymerase catalyzes the transcription of DNA into RNA using the four ribonucleoside triphosphates as substrates. The chain is DNA-directed RNA polymerase subunit alpha from Tolumonas auensis (strain DSM 9187 / NBRC 110442 / TA 4).